Reading from the N-terminus, the 224-residue chain is Holliday junction branch migration complex subunit RuvA (224 aa).

Positions 1-67 (MISWLKGEKV…EDGTSLYGFI (67 aa)) are domain I. The domain II stretch occupies residues 68–146 (EVNQRDLFRE…RFTDNDKTIH (79 aa)). The segment at 147–155 (ENKKGIEAN) is flexible linker. The segment at 156–224 (QFSKYIDEIY…ILMKLSEKTT (69 aa)) is domain III.

The protein belongs to the RuvA family. In terms of assembly, homotetramer. Forms an RuvA(8)-RuvB(12)-Holliday junction (HJ) complex. HJ DNA is sandwiched between 2 RuvA tetramers; dsDNA enters through RuvA and exits via RuvB. An RuvB hexamer assembles on each DNA strand where it exits the tetramer. Each RuvB hexamer is contacted by two RuvA subunits (via domain III) on 2 adjacent RuvB subunits; this complex drives branch migration. In the full resolvosome a probable DNA-RuvA(4)-RuvB(12)-RuvC(2) complex forms which resolves the HJ.

The protein localises to the cytoplasm. The RuvA-RuvB-RuvC complex processes Holliday junction (HJ) DNA during genetic recombination and DNA repair, while the RuvA-RuvB complex plays an important role in the rescue of blocked DNA replication forks via replication fork reversal (RFR). RuvA specifically binds to HJ cruciform DNA, conferring on it an open structure. The RuvB hexamer acts as an ATP-dependent pump, pulling dsDNA into and through the RuvAB complex. HJ branch migration allows RuvC to scan DNA until it finds its consensus sequence, where it cleaves and resolves the cruciform DNA. The chain is Holliday junction branch migration complex subunit RuvA from Prochlorococcus marinus (strain NATL1A).